The following is a 293-amino-acid chain: Formamidopyrimidine-DNA glycosylase (293 aa).

Proline 2 acts as the Schiff-base intermediate with DNA in catalysis. Glutamate 3 acts as the Proton donor in catalysis. Residue lysine 58 is the Proton donor; for beta-elimination activity of the active site. DNA contacts are provided by histidine 104, arginine 123, and lysine 166. The segment at 257-293 adopts an FPG-type zinc-finger fold; it reads AVYDREGERCRTPGCNGTVKRLVQNGRSTFWCSGCQT. Arginine 283 serves as the catalytic Proton donor; for delta-elimination activity.

Belongs to the FPG family. In terms of assembly, monomer. The cofactor is Zn(2+).

The enzyme catalyses Hydrolysis of DNA containing ring-opened 7-methylguanine residues, releasing 2,6-diamino-4-hydroxy-5-(N-methyl)formamidopyrimidine.. It carries out the reaction 2'-deoxyribonucleotide-(2'-deoxyribose 5'-phosphate)-2'-deoxyribonucleotide-DNA = a 3'-end 2'-deoxyribonucleotide-(2,3-dehydro-2,3-deoxyribose 5'-phosphate)-DNA + a 5'-end 5'-phospho-2'-deoxyribonucleoside-DNA + H(+). Functionally, involved in base excision repair of DNA damaged by oxidation or by mutagenic agents. Acts as a DNA glycosylase that recognizes and removes damaged bases. Has a preference for oxidized purines, such as 7,8-dihydro-8-oxoguanine (8-oxoG). Has AP (apurinic/apyrimidinic) lyase activity and introduces nicks in the DNA strand. Cleaves the DNA backbone by beta-delta elimination to generate a single-strand break at the site of the removed base with both 3'- and 5'-phosphates. The sequence is that of Formamidopyrimidine-DNA glycosylase from Rhodopseudomonas palustris (strain HaA2).